Consider the following 822-residue polypeptide: Cation/H(+) antiporter 3 (822 aa).

The next 12 membrane-spanning stretches (helical) occupy residues 55-75, 116-136, 150-170, 190-210, 224-244, 274-294, 305-325, 331-351, 362-382, 388-408, 418-438, and 447-467; these read FPHL…LHFF, EIVF…LMGV, AITI…VIFF, YVVI…NLLF, ISSA…LIFM, IVVL…FYII, AIYL…ANWC, MGPF…SAII, FLPF…LFGW, IILI…VPAL, FALS…YALA, and ETFT…PPIL.

This sequence belongs to the monovalent cation:proton antiporter 2 (CPA2) transporter (TC 2.A.37) family. CHX (TC 2.A.37.4) subfamily.

It is found in the membrane. Its function is as follows. May operate as a cation/H(+) antiporter. The polypeptide is Cation/H(+) antiporter 3 (CHX3) (Arabidopsis thaliana (Mouse-ear cress)).